The sequence spans 305 residues: Heat stress transcription factor B-4d (305 aa).

A hydrophobic repeat HR-A/B region spans residues 201–230 (LRRRNSLLLSELAHMRKLYNDIIYFLQNHV). The short motif at 286–289 (KKRR) is the Nuclear localization signal element. The disordered stretch occupies residues 286-305 (KKRRVQLVQEDEGDEQGSEG). A compositionally biased stretch (acidic residues) spans 294–305 (QEDEGDEQGSEG).

It belongs to the HSF family. Class B subfamily. In terms of assembly, homotrimer. In terms of processing, exhibits temperature-dependent phosphorylation.

It is found in the nucleus. Its function is as follows. Transcriptional regulator that specifically binds DNA of heat shock promoter elements (HSE). The chain is Heat stress transcription factor B-4d (HSFB4D) from Oryza sativa subsp. japonica (Rice).